Reading from the N-terminus, the 347-residue chain is Beta-hexosaminidase (347 aa).

Residues aspartate 62, arginine 70, arginine 134, and 164-165 each bind substrate; that span reads KH. Histidine 177 functions as the Proton donor/acceptor in the catalytic mechanism. The Nucleophile role is filled by aspartate 249.

Belongs to the glycosyl hydrolase 3 family. NagZ subfamily.

The protein localises to the cytoplasm. The enzyme catalyses Hydrolysis of terminal non-reducing N-acetyl-D-hexosamine residues in N-acetyl-beta-D-hexosaminides.. The protein operates within cell wall biogenesis; peptidoglycan recycling. Functionally, plays a role in peptidoglycan recycling by cleaving the terminal beta-1,4-linked N-acetylglucosamine (GlcNAc) from peptide-linked peptidoglycan fragments, giving rise to free GlcNAc, anhydro-N-acetylmuramic acid and anhydro-N-acetylmuramic acid-linked peptides. In Mannheimia succiniciproducens (strain KCTC 0769BP / MBEL55E), this protein is Beta-hexosaminidase.